The sequence spans 391 residues: MKFIDEALIRVEAGDGGNGCVSFRREKFIPKGGPDGGDGGDGGDVYLIADENLNTLIDYRFEKRFAAGRGENGRSAGCTGHRGSDITLRVPVGTRAIDNDTQEVIGDLTKHGMKMLVAKGGYHGLGNTRFKSSVNRAPRQKTNGTPGEKRDLQLELMLLADVGMLGLPNAGKSTFIRAVSAAKPKVADYPFTTLVPSLGVARVGADRSFVVADIPGLIEGAAEGAGLGIRFLKHLERCRVLIHLVDIMPIDESDPAQNISIIESELYQYSEKLADKPQWLVFNKIDTIGEEEARERAEAIVEEIGWEGDYYLISAATGQNVSALTRDIMDFIEANPRVEEEEKAKEEVAFKWDDYHQQAMQNPITEDDWDDLDDDGWTEEDDEGVEFIYKP.

Residues 1–159 (MKFIDEALIR…RDLQLELMLL (159 aa)) form the Obg domain. Residues 160–333 (ADVGMLGLPN…LTRDIMDFIE (174 aa)) form the OBG-type G domain. Residues 166-173 (GLPNAGKS), 191-195 (FTTLV), 213-216 (DIPG), 283-286 (NKID), and 314-316 (SAA) contribute to the GTP site. Mg(2+) contacts are provided by Ser-173 and Thr-193. The disordered stretch occupies residues 361 to 391 (QNPITEDDWDDLDDDGWTEEDDEGVEFIYKP). The span at 365-385 (TEDDWDDLDDDGWTEEDDEGV) shows a compositional bias: acidic residues.

Belongs to the TRAFAC class OBG-HflX-like GTPase superfamily. OBG GTPase family. In terms of assembly, monomer. Mg(2+) serves as cofactor.

It localises to the cytoplasm. An essential GTPase which binds GTP, GDP and possibly (p)ppGpp with moderate affinity, with high nucleotide exchange rates and a fairly low GTP hydrolysis rate. Plays a role in control of the cell cycle, stress response, ribosome biogenesis and in those bacteria that undergo differentiation, in morphogenesis control. This Glaesserella parasuis serovar 5 (strain SH0165) (Haemophilus parasuis) protein is GTPase Obg.